The primary structure comprises 102 residues: Integration host factor subunit beta (102 aa).

This sequence belongs to the bacterial histone-like protein family. As to quaternary structure, heterodimer of an alpha and a beta chain.

Functionally, this protein is one of the two subunits of integration host factor, a specific DNA-binding protein that functions in genetic recombination as well as in transcriptional and translational control. This chain is Integration host factor subunit beta (ihfB), found in Rhizobium radiobacter (Agrobacterium tumefaciens).